Consider the following 495-residue polypeptide: Leucine aminopeptidase 2 (495 aa).

A signal peptide spans 1 to 21 (MKSQLLSLAVAVSTISQGVVG). Positions 124-218 (PPANKIMAEL…EDGKNLASLV (95 aa)) constitute a PA domain. 2 N-linked (GlcNAc...) asparagine glycosylation sites follow: Asn-142 and Asn-235. Positions 259 and 271 each coordinate Zn(2+). N-linked (GlcNAc...) asparagine glycosylation occurs at Asn-272. The active-site Proton acceptor is the Glu-303. Residues Glu-304 and Asp-332 each coordinate Zn(2+). The N-linked (GlcNAc...) asparagine glycan is linked to Asn-352. His-430 is a binding site for Zn(2+).

It belongs to the peptidase M28 family. M28A subfamily. In terms of assembly, monomer. The cofactor is Zn(2+).

Its subcellular location is the secreted. In terms of biological role, extracellular aminopeptidase that releases a wide variety of amino acids from natural peptides and contributes to pathogenicity. The protein is Leucine aminopeptidase 2 (LAP2) of Trichophyton equinum (Horse ringworm fungus).